A 231-amino-acid chain; its full sequence is L-ribulose-5-phosphate 4-epimerase (231 aa).

Substrate-binding positions include 27–28 (GN), 44–45 (SG), and 74–75 (SS). Residues Asp76, His95, and His97 each contribute to the Zn(2+) site. Catalysis depends on Asp120, which acts as the Proton donor/acceptor. His171 contributes to the Zn(2+) binding site. Tyr229 serves as the catalytic Proton donor/acceptor.

This sequence belongs to the aldolase class II family. AraD/FucA subfamily. In terms of assembly, homotetramer. It depends on Zn(2+) as a cofactor.

The enzyme catalyses L-ribulose 5-phosphate = D-xylulose 5-phosphate. The protein operates within carbohydrate degradation; L-arabinose degradation via L-ribulose; D-xylulose 5-phosphate from L-arabinose (bacterial route): step 3/3. In terms of biological role, involved in the degradation of L-arabinose. Catalyzes the interconversion of L-ribulose 5-phosphate (LRu5P) and D-xylulose 5-phosphate (D-Xu5P) via a retroaldol/aldol mechanism (carbon-carbon bond cleavage analogous to a class II aldolase reaction). The sequence is that of L-ribulose-5-phosphate 4-epimerase from Salmonella typhimurium (strain LT2 / SGSC1412 / ATCC 700720).